The chain runs to 294 residues: N-acetylmuramic acid 6-phosphate etherase (294 aa).

One can recognise an SIS domain in the interval valine 54 to lysine 217. Glutamate 82 acts as the Proton donor in catalysis. The active site involves glutamate 113.

This sequence belongs to the GCKR-like family. MurNAc-6-P etherase subfamily. Homodimer.

It carries out the reaction N-acetyl-D-muramate 6-phosphate + H2O = N-acetyl-D-glucosamine 6-phosphate + (R)-lactate. It functions in the pathway amino-sugar metabolism; N-acetylmuramate degradation. Its function is as follows. Specifically catalyzes the cleavage of the D-lactyl ether substituent of MurNAc 6-phosphate, producing GlcNAc 6-phosphate and D-lactate. This is N-acetylmuramic acid 6-phosphate etherase from Bacillus thuringiensis subsp. konkukian (strain 97-27).